We begin with the raw amino-acid sequence, 402 residues long: Probable 2,3-bisphosphoglycerate-independent phosphoglycerate mutase (402 aa).

Belongs to the BPG-independent phosphoglycerate mutase family. A-PGAM subfamily.

The enzyme catalyses (2R)-2-phosphoglycerate = (2R)-3-phosphoglycerate. It functions in the pathway carbohydrate degradation; glycolysis; pyruvate from D-glyceraldehyde 3-phosphate: step 3/5. In terms of biological role, catalyzes the interconversion of 2-phosphoglycerate and 3-phosphoglycerate. The polypeptide is Probable 2,3-bisphosphoglycerate-independent phosphoglycerate mutase (Thermosipho melanesiensis (strain DSM 12029 / CIP 104789 / BI429)).